The chain runs to 416 residues: Putative pseudouridine transporter (416 aa).

At 1–2 the chain is on the periplasmic side; sequence MD. Residues 3–23 form a helical membrane-spanning segment; sequence IMRSVVGMVVLLAIAFLLSVN. Topologically, residues 24–31 are cytoplasmic; that stretch reads KKSISLRT. The chain crosses the membrane as a helical span at residues 32 to 52; sequence VGAALLLQIAIGGIMLYFPPG. The Periplasmic portion of the chain corresponds to 53-104; it reads KWAVEQAALGVHKVMSYSDAGSAFIFGSLVGPKMDVLFDGAGFIFAFRVLPA. A helical membrane pass occupies residues 105–125; it reads IIFVTALISLLYYIGVMGLLI. Residues 126 to 172 lie on the Cytoplasmic side of the membrane; that stretch reads RILGSIFQKALNISKIESFVAVTTIFLGQNEIPAIVKPFIDRMNRNE. A helical transmembrane segment spans residues 173–193; it reads LFTAICSGMASIAGSMMIGYA. Residues 194-196 are Periplasmic-facing; that stretch reads GMG. Residues 197 to 217 form a helical membrane-spanning segment; that stretch reads VPIDYLLAASLMAIPGGILFA. At 218–268 the chain is on the cytoplasmic side; sequence RILSPATEPSQVTFENLSFSETPPKSFIEAAASGAMTGLKIAAGVATVVMA. A helical transmembrane segment spans residues 269 to 289; the sequence is FVAIIALINGIIGGIGGWFGF. The Periplasmic segment spans residues 290 to 352; it reads ANASLESIFG…QTGGTLEVKT (63 aa). Residues 353–373 form a helical membrane-spanning segment; it reads IAIISFALCGFANFGSIGVVV. Over 374 to 394 the chain is Cytoplasmic; sequence GAFSAISPKRAPEIAQLGLRA. A helical transmembrane segment spans residues 395–415; sequence LAAATLSNLMSATIAGFFIGL. Residue alanine 416 is a topological domain, periplasmic.

The protein belongs to the concentrative nucleoside transporter (CNT) (TC 2.A.41) family.

It is found in the cell inner membrane. Could be involved in pseudouridine transport. The sequence is that of Putative pseudouridine transporter (psuT) from Escherichia coli (strain K12).